The primary structure comprises 355 residues: Protein FIP1 (355 aa).

Transmembrane regions (helical) follow at residues 42–62 (YLYM…PWMF), 72–92 (LLCC…QYFV), 113–133 (VVRL…LVIV), and 149–169 (IIML…IGYV). Positions 220–337 (LHFLSEEILC…RMSNSELQKE (118 aa)) form a coiled coil. Basic and acidic residues predominate over residues 331–340 (NSELQKEVAS). Residues 331–355 (NSELQKEVASTRRKQMLETTTSEQP) are disordered.

Belongs to the TMEM192 family. As to quaternary structure, interacts with FRI.

The protein localises to the membrane. In Arabidopsis thaliana (Mouse-ear cress), this protein is Protein FIP1.